The chain runs to 418 residues: AP-3 complex subunit mu-2 (418 aa).

Positions 176–417 (NNEAYFDVIE…MTKAGKFQVR (242 aa)) constitute an MHD domain.

This sequence belongs to the adaptor complexes medium subunit family. AP-3 associates with the BLOC-1 complex. Adaptor protein complex 3 (AP-3) is a heterotetramer composed of two large adaptins (delta-type subunit AP3D1 and beta-type subunit AP3B1 or AP3B2), a medium adaptin (mu-type subunit AP3M1 or AP3M2) and a small adaptin (sigma-type subunit APS1 or AP3S2).

Its subcellular location is the golgi apparatus. The protein localises to the cytoplasmic vesicle membrane. Functionally, part of the AP-3 complex, an adaptor-related complex which is not clathrin-associated. The complex is associated with the Golgi region as well as more peripheral structures. It facilitates the budding of vesicles from the Golgi membrane and may be directly involved in trafficking to lysosomes. In concert with the BLOC-1 complex, AP-3 is required to target cargos into vesicles assembled at cell bodies for delivery into neurites and nerve terminals. In Homo sapiens (Human), this protein is AP-3 complex subunit mu-2 (AP3M2).